The primary structure comprises 155 residues: Large ribosomal subunit protein uL13 (155 aa).

It belongs to the universal ribosomal protein uL13 family. As to quaternary structure, part of the 50S ribosomal subunit.

Its function is as follows. This protein is one of the early assembly proteins of the 50S ribosomal subunit, although it is not seen to bind rRNA by itself. It is important during the early stages of 50S assembly. In Rickettsia conorii (strain ATCC VR-613 / Malish 7), this protein is Large ribosomal subunit protein uL13.